The following is a 337-amino-acid chain: Oxidoreductase andH (337 aa).

Belongs to the NmrA-type oxidoreductase family.

It functions in the pathway secondary metabolite biosynthesis; terpenoid biosynthesis. Its function is as follows. Oxidoreductase; part of the gene cluster that mediates the biosynthesis of anditomin, a fungal meroterpenoid. The first step of the pathway is the synthesis of 3,5-dimethylorsellinic acid (DMOA) by the polyketide synthase andM. DMOA is then converted to the phthalide compound 5,7-dihydroxy-4,6-dimethylphthalide (DHDMP) by the cytochrome P450 monooxygenase andK, which is further prenylated by the prenyltransferase andD to yield farnesyl-DHDMP. Further epoxidation by the FAD-dependent monooxygenase andE leads to epoxyfarnesyl-DHDMP. The next step involves the terpene cyclase andB that converts epoxyfarnesyl-DHDMP into preandiloid A through opening of the epoxide ring followed by the cyclization of the farnesyl moiety. Preandiloid A is in turn oxidized at the C-3 hydroxyl group to yield preandiloid B by the dehydrogenase andC. The dioxygenase andA is solely responsible for the dehydrogenation of preandiloid B leading to the enone preandiloid C, as well as for the intriguing structural rearrangement to generate the bicyclo[2.2.2]octane core, transforming preandiloid C into andiconin. FAD-binding monooxygenase andJ then produces andilesin D which is reduced by dehydrogenase andI to yield andilesin A. Action of acetyltransferase andG followed by a spontaneous acetate elimination leads then to andilesin B, which is in turn substrate of the short chain dehydrogenase andH to yield andilesin C. Finally, the dioxygenase andF catalyzes the transformation of andilesin C to anditomin. The chain is Oxidoreductase andH from Emericella variicolor (Aspergillus stellatus).